The chain runs to 250 residues: Insertion sequence IS232 putative ATP-binding protein (250 aa).

108–115 provides a ligand contact to ATP; it reads GPSGVGKT.

Belongs to the IS21/IS1162 putative ATP-binding protein family.

The chain is Insertion sequence IS232 putative ATP-binding protein from Bacillus thuringiensis subsp. berliner.